Consider the following 642-residue polypeptide: Threonine--tRNA ligase (642 aa).

The region spanning 1 to 61 (MPIITLPDGS…SEDANLEIIT (61 aa)) is the TGS domain. The tract at residues 243-534 (DHRKIGKALD…ITEEYAGFFP (292 aa)) is catalytic. Zn(2+) is bound by residues cysteine 334, histidine 385, and histidine 511.

It belongs to the class-II aminoacyl-tRNA synthetase family. Homodimer. Zn(2+) serves as cofactor.

It localises to the cytoplasm. It catalyses the reaction tRNA(Thr) + L-threonine + ATP = L-threonyl-tRNA(Thr) + AMP + diphosphate + H(+). In terms of biological role, catalyzes the attachment of threonine to tRNA(Thr) in a two-step reaction: L-threonine is first activated by ATP to form Thr-AMP and then transferred to the acceptor end of tRNA(Thr). Also edits incorrectly charged L-seryl-tRNA(Thr). The sequence is that of Threonine--tRNA ligase from Histophilus somni (strain 129Pt) (Haemophilus somnus).